We begin with the raw amino-acid sequence, 452 residues long: Maltoporin (452 aa).

The first 25 residues, 1 to 25 (MMITLRKLPLAVAVAAGVMSAQAMA), serve as a signal peptide directing secretion.

Belongs to the porin LamB (TC 1.B.3) family. Homotrimer formed of three 18-stranded antiparallel beta-barrels, containing three independent channels.

The protein resides in the cell outer membrane. It carries out the reaction beta-maltose(in) = beta-maltose(out). Functionally, involved in the transport of maltose and maltodextrins. The polypeptide is Maltoporin (Salmonella newport (strain SL254)).